A 174-amino-acid chain; its full sequence is MTVPKEAEGLIGSHYRAPDYFEVGREKIREFALAVKDDHPAHFDESESAAAGYPDMVAPLTFLAIAGRRVQLEIFTKFSIPINIARVIHRDQKFKFHRPILAHDRLYFDTYLDSVIESHGTVLAEIRSEVTDADGKPIVTSVVTMLGEAAHQEADAAATAAAVASISAGKLGAI.

A MaoC-like domain is found at 11 to 131; the sequence is IGSHYRAPDY…VLAEIRSEVT (121 aa).

Belongs to the UPF0336 family.

This is UPF0336 protein MAP_3996c from Mycolicibacterium paratuberculosis (strain ATCC BAA-968 / K-10) (Mycobacterium paratuberculosis).